Reading from the N-terminus, the 232-residue chain is Glutathione S-transferase E14 (232 aa).

The region spanning 4–85 (PKPILYYDER…HLAEKFDEGG (82 aa)) is the GST N-terminal domain. A GST C-terminal domain is found at 91 to 218 (EHAERMKVLN…RQTMESVGSF (128 aa)).

Belongs to the GST superfamily. Epsilon family. As to expression, expressed in the adult ovary (at protein level).

The catalysed reaction is RX + glutathione = an S-substituted glutathione + a halide anion + H(+). Conjugation of reduced glutathione to a wide number of exogenous and endogenous hydrophobic electrophiles. Essential for ecdysteroid biosynthesis. May be involved in detoxification. The polypeptide is Glutathione S-transferase E14 (Drosophila melanogaster (Fruit fly)).